The following is a 240-amino-acid chain: Vesicle-associated membrane protein 727 (240 aa).

Topologically, residues 1–215 are cytoplasmic; sequence MSQKGLIYSF…MWLQSLQMKL (215 aa). One can recognise a Longin domain in the interval 6 to 133; sequence LIYSFVAKGT…NLDREFGPIL (128 aa). The v-SNARE coiled-coil homology domain maps to 149–209; sequence KLSKLKAQIT…RQLRRKMWLQ (61 aa). The helical; Anchor for type IV membrane protein transmembrane segment at 216 to 236 threads the bilayer; that stretch reads MVAGAVFSFILIVWVVACGGF. At 237 to 240 the chain is on the vesicular side; sequence KCSS.

The protein belongs to the synaptobrevin family. As to quaternary structure, interacts with subunits of the class C core vacuole/endosome tethering (CORVET) complex including VPS11, VCL1, VPS18, VPS33, VPS3 and VPS8. In terms of tissue distribution, highly expressed in flowers. Detected in leaves, stems and roots.

The protein localises to the early endosome membrane. The protein resides in the endosome membrane. In terms of biological role, involved in the targeting and/or fusion of transport vesicles to their target membrane. This is Vesicle-associated membrane protein 727 (VAMP727) from Arabidopsis thaliana (Mouse-ear cress).